The following is a 167-amino-acid chain: Glutathione peroxidase-like peroxiredoxin 1 (167 aa).

C36 functions as the Cysteine sulfenic acid (-SOH) intermediate in the catalytic mechanism. C36 and C82 are oxidised to a cystine.

The protein belongs to the glutathione peroxidase family. In terms of assembly, monomer.

The protein localises to the peroxisome matrix. It localises to the mitochondrion outer membrane. It catalyses the reaction 2 glutathione + H2O2 = glutathione disulfide + 2 H2O. It carries out the reaction a hydroperoxide + [thioredoxin]-dithiol = an alcohol + [thioredoxin]-disulfide + H2O. In terms of biological role, glutathione peroxidase-like protein that protects cells from phospholipid hydroperoxides and nonphospholipid peroxides during oxidative stress. Has peroxidase activity using thioredoxin or glutathione as a reducing power. Involved in peroxisome formation. In Saccharomyces cerevisiae (strain ATCC 204508 / S288c) (Baker's yeast), this protein is Glutathione peroxidase-like peroxiredoxin 1.